The sequence spans 89 residues: Small ribosomal subunit protein uS15 (89 aa).

It belongs to the universal ribosomal protein uS15 family. As to quaternary structure, part of the 30S ribosomal subunit. Forms a bridge to the 50S subunit in the 70S ribosome, contacting the 23S rRNA.

Functionally, one of the primary rRNA binding proteins, it binds directly to 16S rRNA where it helps nucleate assembly of the platform of the 30S subunit by binding and bridging several RNA helices of the 16S rRNA. Its function is as follows. Forms an intersubunit bridge (bridge B4) with the 23S rRNA of the 50S subunit in the ribosome. This is Small ribosomal subunit protein uS15 from Rhizorhabdus wittichii (strain DSM 6014 / CCUG 31198 / JCM 15750 / NBRC 105917 / EY 4224 / RW1) (Sphingomonas wittichii).